Reading from the N-terminus, the 428-residue chain is D-amino acid dehydrogenase (428 aa).

3-17 is a binding site for FAD; that stretch reads VVVLGSGVVGVTSAY.

Belongs to the DadA oxidoreductase family. The cofactor is FAD.

The enzyme catalyses a D-alpha-amino acid + A + H2O = a 2-oxocarboxylate + AH2 + NH4(+). Its pathway is amino-acid degradation; D-alanine degradation; NH(3) and pyruvate from D-alanine: step 1/1. Its function is as follows. Oxidative deamination of D-amino acids. This chain is D-amino acid dehydrogenase, found in Paraburkholderia phymatum (strain DSM 17167 / CIP 108236 / LMG 21445 / STM815) (Burkholderia phymatum).